A 364-amino-acid chain; its full sequence is 3-isopropylmalate dehydrogenase (364 aa).

Position 79-92 (79-92 (GSKWDHLPEIEKPE)) interacts with NAD(+). Residues R100, R110, R139, and D227 each contribute to the substrate site. D227, D251, and D255 together coordinate Mg(2+). 285-297 (GSAPNIAGKTIAN) is an NAD(+) binding site.

The protein belongs to the isocitrate and isopropylmalate dehydrogenases family. LeuB type 1 subfamily. In terms of assembly, homodimer. It depends on Mg(2+) as a cofactor. Mn(2+) serves as cofactor.

Its subcellular location is the cytoplasm. The catalysed reaction is (2R,3S)-3-isopropylmalate + NAD(+) = 4-methyl-2-oxopentanoate + CO2 + NADH. It functions in the pathway amino-acid biosynthesis; L-leucine biosynthesis; L-leucine from 3-methyl-2-oxobutanoate: step 3/4. In terms of biological role, catalyzes the oxidation of 3-carboxy-2-hydroxy-4-methylpentanoate (3-isopropylmalate) to 3-carboxy-4-methyl-2-oxopentanoate. The product decarboxylates to 4-methyl-2 oxopentanoate. In Buchnera aphidicola subsp. Thelaxes suberi, this protein is 3-isopropylmalate dehydrogenase.